Consider the following 337-residue polypeptide: Dihydroorotate dehydrogenase (quinone) (337 aa).

Residues 62-66 (AGLDK) and T86 contribute to the FMN site. K66 contributes to the substrate binding site. 111–115 (NRMGF) lines the substrate pocket. The FMN site is built by N140 and N173. N173 contributes to the substrate binding site. The Nucleophile role is filled by S176. N178 contributes to the substrate binding site. FMN-binding residues include K218 and T246. 247–248 (NT) contacts substrate. Residues G269, G298, and 319-320 (YS) each bind FMN.

The protein belongs to the dihydroorotate dehydrogenase family. Type 2 subfamily. As to quaternary structure, monomer. Requires FMN as cofactor.

The protein resides in the cell membrane. The catalysed reaction is (S)-dihydroorotate + a quinone = orotate + a quinol. It participates in pyrimidine metabolism; UMP biosynthesis via de novo pathway; orotate from (S)-dihydroorotate (quinone route): step 1/1. Catalyzes the conversion of dihydroorotate to orotate with quinone as electron acceptor. The protein is Dihydroorotate dehydrogenase (quinone) of Wigglesworthia glossinidia brevipalpis.